Reading from the N-terminus, the 151-residue chain is Myosin light polypeptide 6 (151 aa).

Cys2 bears the N-acetylcysteine mark. EF-hand domains are found at residues 7–42, 84–119, and 119–151; these read EQTA…LGQN, GCFE…LGEK, and KMTE…VLSG.

In terms of assembly, myosin is a hexamer of 2 heavy chains and 4 light chains.

Functionally, regulatory light chain of myosin. Does not bind calcium. The sequence is that of Myosin light polypeptide 6 (MYL6) from Gallus gallus (Chicken).